The primary structure comprises 693 residues: Elongation factor G 1 (693 aa).

One can recognise a tr-type G domain in the interval 4-281 (NKLRNIGISA…AVTRFLPSPH (278 aa)). GTP is bound by residues 13–20 (AHIDSGKT), 80–84 (DTPGH), and 134–137 (NKCD).

It belongs to the TRAFAC class translation factor GTPase superfamily. Classic translation factor GTPase family. EF-G/EF-2 subfamily.

It is found in the cytoplasm. Functionally, catalyzes the GTP-dependent ribosomal translocation step during translation elongation. During this step, the ribosome changes from the pre-translocational (PRE) to the post-translocational (POST) state as the newly formed A-site-bound peptidyl-tRNA and P-site-bound deacylated tRNA move to the P and E sites, respectively. Catalyzes the coordinated movement of the two tRNA molecules, the mRNA and conformational changes in the ribosome. The sequence is that of Elongation factor G 1 from Borreliella afzelii (strain PKo) (Borrelia afzelii).